The sequence spans 59 residues: MAIKPDYVKKTGNILMERYQDAFSREDFEHNKDAVTELTNIESKNVRNRIAGYITHKRN.

Belongs to the eukaryotic ribosomal protein eS17 family.

The protein is Small ribosomal subunit protein eS17 of Halobacterium salinarum (strain ATCC 29341 / DSM 671 / R1).